The following is a 686-amino-acid chain: Chondroitin synthase (686 aa).

The galactosaminyltransferase; A1 domain stretch occupies residues 130–417 (YVWAGKRKEL…LLQQKVPYFY (288 aa)). UDP-N-acetyl-alpha-D-galactosamine-binding positions include proline 157, arginine 161, aspartate 188, tyrosine 217, arginine 223, and 239 to 240 (DC). Mn(2+) is bound at residue aspartate 241. 361–362 (ED) is a binding site for UDP-N-acetyl-alpha-D-galactosamine. Residue histidine 386 participates in Mn(2+) binding. The tract at residues 418–682 (RKKEKIESAT…ECRKYTWEKI (265 aa)) is glucuronosyltransferase; A2 domain. UDP-alpha-D-glucuronate-binding positions include tyrosine 441, aspartate 469, and 517 to 520 (QLDS). Residue aspartate 521 participates in Mn(2+) binding. UDP-alpha-D-glucuronate is bound by residues histidine 581 and 603–604 (AV). Histidine 631 contributes to the Mn(2+) binding site.

The protein belongs to the glycosyltransferase 2 family. CS/HAS subfamily. The cofactor is Mn(2+).

It catalyses the reaction 3-O-(beta-D-GlcA-(1-&gt;3)-beta-D-GalNAc-(1-&gt;4)-beta-D-GlcA-(1-&gt;3)-beta-D-Gal-(1-&gt;3)-beta-D-Gal-(1-&gt;4)-beta-D-Xyl)-L-seryl-[protein] + UDP-N-acetyl-alpha-D-galactosamine = 3-O-(beta-D-GalNAc-(1-&gt;4)-beta-D-GlcA-(1-&gt;3)-beta-D-GalNAc-(1-&gt;4)-beta-D-GlcA-(1-&gt;3)-beta-D-Gal-(1-&gt;3)-beta-D-Gal-(1-&gt;4)-beta-D-Xyl)-L-seryl-[protein] + UDP + H(+). It carries out the reaction 3-O-{beta-D-GlcA-(1-&gt;3)-[beta-D-GalNAc-(1-&gt;4)-beta-D-GlcA-(1-&gt;3)](n)-beta-D-GalNAc-(1-&gt;4)-beta-D-GlcA-(1-&gt;3)-beta-D-Gal-(1-&gt;3)-beta-D-Gal-(1-&gt;4)-beta-D-Xyl}-L-seryl-[protein] + UDP-N-acetyl-alpha-D-galactosamine = 3-O-{[beta-D-GalNAc-(1-&gt;4)-beta-D-GlcA-(1-&gt;3)](n+1)-beta-D-GalNAc-(1-&gt;4)-beta-D-GlcA-(1-&gt;3)-beta-D-Gal-(1-&gt;3)-beta-D-Gal-(1-&gt;4)-beta-D-Xyl}-L-seryl-[protein] + UDP + H(+). The catalysed reaction is 3-O-(beta-D-GalNAc-(1-&gt;4)-beta-D-GlcA-(1-&gt;3)-beta-D-Gal-(1-&gt;3)-beta-D-Gal-(1-&gt;4)-beta-D-Xyl)-L-seryl-[protein] + UDP-alpha-D-glucuronate = 3-O-(beta-D-GlcA-(1-&gt;3)-beta-D-GalNAc-(1-&gt;4)-beta-D-GlcA-(1-&gt;3)-beta-D-Gal-(1-&gt;3)-beta-D-Gal-(1-&gt;4)-beta-D-Xyl)-L-seryl-[protein] + UDP + H(+). The enzyme catalyses 3-O-{[beta-D-GalNAc-(1-&gt;4)-beta-D-GlcA-(1-&gt;3)](n)-beta-D-GalNAc-(1-&gt;4)-beta-D-GlcA-(1-&gt;3)-beta-D-Gal-(1-&gt;3)-beta-D-Gal-(1-&gt;4)-beta-D-Xyl}-L-seryl-[protein] + UDP-alpha-D-glucuronate = 3-O-{beta-D-GlcA-(1-&gt;3)-[beta-D-GalNAc-(1-&gt;4)-beta-D-GlcA-(1-&gt;3)](n)-beta-D-GalNAc-(1-&gt;4)-beta-D-GlcA-(1-&gt;3)-beta-D-Gal-(1-&gt;3)-beta-D-Gal-(1-&gt;4)-beta-D-Xyl}-L-seryl-[protein] + UDP + H(+). In terms of biological role, glycosyltransferase that catalyzes elongation of chondroitin, a polysaccharide composed of a repeating disaccharide of N-acetylgalactosamine (GalNAc) and glucuronic acid (GlcUA) units, by alternatively transferring the GlcUA and GalNAc moiety from UDP-GlcUA and UDP-GalNAc to the non-reducing ends of the chondroitin chain. Each chondroitin unit has the composition beta-(1-&gt;4)-GlcUA-beta-(1-&gt;3)-GalNAc. This Escherichia coli protein is Chondroitin synthase (kfoC).